The following is a 509-amino-acid chain: Probable cytochrome P450 513A1 (509 aa).

A helical membrane pass occupies residues 2–19; the sequence is NYLVGLVLIFTIFYFFLQ. Residue Cys454 participates in heme binding.

Belongs to the cytochrome P450 family. Heme serves as cofactor.

Its subcellular location is the membrane. The polypeptide is Probable cytochrome P450 513A1 (cyp513A1) (Dictyostelium discoideum (Social amoeba)).